A 547-amino-acid polypeptide reads, in one-letter code: Chaperonin GroEL (547 aa).

ATP is bound by residues 30–33 (TLGP), Lys-51, 87–91 (DGTTT), Gly-415, 479–481 (NAA), and Asp-495. The interval 525-547 (PKEDSPGAGAGMGGMGGMGGMDM) is disordered. The span at 532 to 547 (AGAGMGGMGGMGGMDM) shows a compositional bias: gly residues.

The protein belongs to the chaperonin (HSP60) family. Forms a cylinder of 14 subunits composed of two heptameric rings stacked back-to-back. Interacts with the co-chaperonin GroES.

The protein resides in the cytoplasm. The enzyme catalyses ATP + H2O + a folded polypeptide = ADP + phosphate + an unfolded polypeptide.. In terms of biological role, together with its co-chaperonin GroES, plays an essential role in assisting protein folding. The GroEL-GroES system forms a nano-cage that allows encapsulation of the non-native substrate proteins and provides a physical environment optimized to promote and accelerate protein folding. The sequence is that of Chaperonin GroEL from Nitrosomonas eutropha (strain DSM 101675 / C91 / Nm57).